We begin with the raw amino-acid sequence, 619 residues long: Magnesium-chelatase 67 kDa subunit (619 aa).

Position 33–40 (33–40) interacts with ATP; it reads STVGSGKS. The tract at residues 273–321 is disordered; that stretch reads TRMPEREPSEEEMQQEEPPPPEEQPEQEGEDENAPPDETDSDADEEQEE. Positions 280–321 are enriched in acidic residues; it reads PSEEEMQQEEPPPPEEQPEQEGEDENAPPDETDSDADEEQEE. Residues 431-619 form the VWFA domain; sequence LFIFMVDASG…AEQIVEAALS (189 aa).

This sequence belongs to the Mg-chelatase subunits D/I family.

The enzyme catalyses protoporphyrin IX + Mg(2+) + ATP + H2O = Mg-protoporphyrin IX + ADP + phosphate + 3 H(+). Its pathway is porphyrin-containing compound metabolism; bacteriochlorophyll biosynthesis. Its function is as follows. Involved in bacteriochlorophyll biosynthesis; introduces a magnesium ion into protoporphyrin IX to yield Mg-protoporphyrin IX. The chain is Magnesium-chelatase 67 kDa subunit (bchD) from Chlorobaculum parvum (strain DSM 263 / NCIMB 8327) (Chlorobium vibrioforme subsp. thiosulfatophilum).